We begin with the raw amino-acid sequence, 121 residues long: uncharacterized protein (121 aa).

This is an uncharacterized protein from Caenorhabditis elegans.